We begin with the raw amino-acid sequence, 252 residues long: Imidazole glycerol phosphate synthase subunit HisF (252 aa).

Residues Asp11 and Asp130 contribute to the active site.

Belongs to the HisA/HisF family. As to quaternary structure, heterodimer of HisH and HisF.

The protein resides in the cytoplasm. The enzyme catalyses 5-[(5-phospho-1-deoxy-D-ribulos-1-ylimino)methylamino]-1-(5-phospho-beta-D-ribosyl)imidazole-4-carboxamide + L-glutamine = D-erythro-1-(imidazol-4-yl)glycerol 3-phosphate + 5-amino-1-(5-phospho-beta-D-ribosyl)imidazole-4-carboxamide + L-glutamate + H(+). It functions in the pathway amino-acid biosynthesis; L-histidine biosynthesis; L-histidine from 5-phospho-alpha-D-ribose 1-diphosphate: step 5/9. Functionally, IGPS catalyzes the conversion of PRFAR and glutamine to IGP, AICAR and glutamate. The HisF subunit catalyzes the cyclization activity that produces IGP and AICAR from PRFAR using the ammonia provided by the HisH subunit. This chain is Imidazole glycerol phosphate synthase subunit HisF, found in Hyphomonas neptunium (strain ATCC 15444).